A 943-amino-acid polypeptide reads, in one-letter code: MAASGLDHLKNGYRRRFCRPSRARDINTEQGQNVLEILQDCFEEKSLANDFSTNSTKSVPNSTRKIKDTCIQSPSKECQKSHPKSVPVSSKKKEASLQFVVEPSEATNRSVQAHEVHQKILATDVSSKNTPDSKKISSRNINDHHSEADEEFYLSVGSPSVLLDAKTSVSQNVIPSSAQKRETYTFENSVNMLPSSTEVSVKTKKRLNFDDKVMLKKIEIDNKVSDEEDKTSEGQERKPSGSSQNRIRDSEYEIQRQAKKSFSTLFLETVKRKSESSPIVRHAATAPPHSCPPDDTKLIEDEFIIDESDQSFASRSWITIPRKAGSLKQRTISPAESTALLQGRKSREKHHNILPKTLANDKHSHKPHPVETSQPSDKTVLDTSYALIGETVNNYRSTKYEMYSKNAEKPSRSKRTIKQKQRRKFMAKPAEEQLDVGQSKDENIHTSHITQDEFQRNSDRNMEEHEEMGNDCVSKKQMPPVGSKKSSTRKDKEESKKKRFSSESKNKLVPEEVTSTVTKSRRISRRPSDWWVVKSEESPVYSNSSVRNELPMHHNSSRKSTKKTNQSSKNIRKKTIPLKRQKTATKGNQRVQKFLNAEGSGGIVGHDEISRCSLSEPLESDEADLAKKKNLDCSRSTRSSKNEDNIMTAQNVPLKPQTSGYTCNIPTESNLDSGEHKTSVLEESGPSRLNNNYLMSGKNDVDDEEVHGSSDDSKQSKVIPKNRIHHKLVLPSNTPNVRRTKRTRLKPLEYWRGERIDYQGRPSGGFVISGVLSPDTISSKRKAKENIGKVNKKSNKKRICLDNDERKTNLMVNLGIPLGDPLQPTRVKDPETREIILMDLVRPQDTYQFFVKHGELKVYKTLDTPFFSTGKLILGPQEEKGKQHVGQDILVFYVNFGDLLCTLHETPYILSTGDSFYVPSGNYYNIKNLRNEESVLLFTQIKR.

Residue Lys-45 forms a Glycyl lysine isopeptide (Lys-Gly) (interchain with G-Cter in SUMO2) linkage. Residues 70 to 91 are disordered; the sequence is CIQSPSKECQKSHPKSVPVSSK. Residues Ser-73 and Ser-96 each carry the phosphoserine modification. Lys-119 participates in a covalent cross-link: Glycyl lysine isopeptide (Lys-Gly) (interchain with G-Cter in SUMO2). A Phosphothreonine modification is found at Thr-130. Lys-134 participates in a covalent cross-link: Glycyl lysine isopeptide (Lys-Gly) (interchain with G-Cter in SUMO2). Ser-146 carries the post-translational modification Phosphoserine. A Glycyl lysine isopeptide (Lys-Gly) (interchain with G-Cter in SUMO2) cross-link involves residue Lys-180. Thr-183 bears the Phosphothreonine mark. At Ser-189 the chain carries Phosphoserine. Residues Lys-212 and Lys-217 each participate in a glycyl lysine isopeptide (Lys-Gly) (interchain with G-Cter in SUMO2) cross-link. The span at 224–239 shows a compositional bias: basic and acidic residues; the sequence is VSDEEDKTSEGQERKP. The tract at residues 224 to 250 is disordered; sequence VSDEEDKTSEGQERKPSGSSQNRIRDS. At Ser-225 the chain carries Phosphoserine. Glycyl lysine isopeptide (Lys-Gly) (interchain with G-Cter in SUMO2) cross-links involve residues Lys-238 and Lys-260. The Nuclear localization signal signature appears at 259-273; the sequence is KKSFSTLFLETVKRK. Phosphoserine is present on Ser-261. Glycyl lysine isopeptide (Lys-Gly) (interchain with G-Cter in SUMO2) cross-links involve residues Lys-271, Lys-273, and Lys-297. Ser-316, Ser-333, Ser-376, and Ser-397 each carry phosphoserine. The disordered stretch occupies residues 358–377; sequence LANDKHSHKPHPVETSQPSD. Residues 403-513 form a disordered region; the sequence is YSKNAEKPSR…SKNKLVPEEV (111 aa). Over residues 412-426 the composition is skewed to basic residues; that stretch reads RSKRTIKQKQRRKFM. Basic and acidic residues-rich tracts occupy residues 438-463 and 488-510; these read QSKD…RNME and TRKD…KLVP. Phosphoserine is present on Ser-439. Lys-440 is covalently cross-linked (Glycyl lysine isopeptide (Lys-Gly) (interchain with G-Cter in SUMO2)). The Nuclear localization signal motif lies at 484 to 499; the sequence is KKSSTRKDKEESKKKR. Ser-528 carries the post-translational modification Phosphoserine. A Glycyl lysine isopeptide (Lys-Gly) (interchain with G-Cter in SUMO2) cross-link involves residue Lys-534. Disordered stretches follow at residues 537–587 and 632–717; these read ESPV…ATKG and DCSR…KQSK. Ser-538 is subject to Phosphoserine. Positions 558-574 match the Nuclear localization signal motif; sequence RKSTKKTNQSSKNIRKK. Basic residues predominate over residues 570-583; sequence NIRKKTIPLKRQKT. Over residues 633 to 672 the composition is skewed to polar residues; that stretch reads CSRSTRSSKNEDNIMTAQNVPLKPQTSGYTCNIPTESNLD. Residue Lys-677 forms a Glycyl lysine isopeptide (Lys-Gly) (interchain with G-Cter in SUMO2) linkage. Phosphoserine occurs at positions 684, 709, and 710. The segment covering 706–715 has biased composition (basic and acidic residues); sequence VHGSSDDSKQ. Lys-727 participates in a covalent cross-link: Glycyl lysine isopeptide (Lys-Gly) (interchain with G-Cter in SUMO2). Phosphothreonine is present on Thr-734. The MIF2 homology domain II stretch occupies residues 737–759; the sequence is VRRTKRTRLKPLEYWRGERIDYQ. Phosphoserine occurs at positions 763 and 773. The short motif at 780 to 798 is the Nuclear localization signal element; it reads KRKAKENIGKVNKKSNKKR. Residue Lys-807 forms a Glycyl lysine isopeptide (Lys-Gly) (interchain with G-Cter in SUMO2) linkage. The interval 890 to 943 is MIF2 homology domain III; the sequence is LVFYVNFGDLLCTLHETPYILSTGDSFYVPSGNYYNIKNLRNEESVLLFTQIKR.

It belongs to the CENP-C/MIF2 family. In terms of assembly, oligomer. Component of the CENPA-NAC complex, at least composed of CENPA, CENPC, CENPH, CENPM, CENPN, CENPT and CENPU. The CENPA-NAC complex interacts with the CENPA-CAD complex, composed of CENPI, CENPK, CENPL, CENPO, CENPP, CENPQ, CENPR and CENPS. Binds to DAXX. Interacts with DNMT3B. Interacts directly with CENPA. Identified in a centromere complex containing histones H2A, H2B and H4, and at least CENPA, CENPB, CENPC, CENPT, CENPN, HJURP, SUPT16H, SSRP1 and RSF1. Interacts with MEIKIN.

The protein resides in the nucleus. It localises to the chromosome. Its subcellular location is the centromere. The protein localises to the kinetochore. Functionally, component of the CENPA-NAC (nucleosome-associated) complex, a complex that plays a central role in assembly of kinetochore proteins, mitotic progression and chromosome segregation. The CENPA-NAC complex recruits the CENPA-CAD (nucleosome distal) complex and may be involved in incorporation of newly synthesized CENPA into centromeres. CENPC recruits DNA methylation and DNMT3B to both centromeric and pericentromeric satellite repeats and regulates the histone code in these regions. This is Centromere protein C (CENPC) from Homo sapiens (Human).